A 276-amino-acid polypeptide reads, in one-letter code: Large ribosomal subunit protein uL2 (276 aa).

2 disordered regions span residues 1-60 (MSIK…RHKR) and 226-276 (NAVD…KRNQ). Positions 20–31 (SKEEITREEPEK) are enriched in basic and acidic residues. Composition is skewed to basic residues over residues 50–60 (STRRQGGRHKR) and 258–276 (KTRR…KRNQ).

The protein belongs to the universal ribosomal protein uL2 family. Part of the 50S ribosomal subunit. Forms a bridge to the 30S subunit in the 70S ribosome.

One of the primary rRNA binding proteins. Required for association of the 30S and 50S subunits to form the 70S ribosome, for tRNA binding and peptide bond formation. It has been suggested to have peptidyltransferase activity; this is somewhat controversial. Makes several contacts with the 16S rRNA in the 70S ribosome. This chain is Large ribosomal subunit protein uL2, found in Natranaerobius thermophilus (strain ATCC BAA-1301 / DSM 18059 / JW/NM-WN-LF).